The primary structure comprises 115 residues: Succinate dehydrogenase assembly factor 3, mitochondrial (115 aa).

This sequence belongs to the complex I LYR family. SDHAF3 subfamily. In terms of assembly, interacts with sdh2 within an sdh1-sdh2 subcomplex.

The protein resides in the mitochondrion matrix. Its function is as follows. Plays an essential role in the assembly of succinate dehydrogenase (SDH), an enzyme complex (also referred to as respiratory complex II) that is a component of both the tricarboxylic acid (TCA) cycle and the mitochondrial electron transport chain, and which couples the oxidation of succinate to fumarate with the reduction of ubiquinone (coenzyme Q) to ubiquinol. Promotes maturation of the iron-sulfur protein subunit sdh2 of the SDH catalytic dimer, protecting it from the deleterious effects of oxidants. May act together with SDHAF1. This chain is Succinate dehydrogenase assembly factor 3, mitochondrial, found in Schizosaccharomyces pombe (strain 972 / ATCC 24843) (Fission yeast).